We begin with the raw amino-acid sequence, 310 residues long: tRNA dimethylallyltransferase (310 aa).

10 to 17 (GPTAVGKS) serves as a coordination point for ATP. A substrate-binding site is contributed by 12 to 17 (TAVGKS). Residues 35 to 38 (DSMQ) are interaction with substrate tRNA.

It belongs to the IPP transferase family. Monomer. It depends on Mg(2+) as a cofactor.

The catalysed reaction is adenosine(37) in tRNA + dimethylallyl diphosphate = N(6)-dimethylallyladenosine(37) in tRNA + diphosphate. Functionally, catalyzes the transfer of a dimethylallyl group onto the adenine at position 37 in tRNAs that read codons beginning with uridine, leading to the formation of N6-(dimethylallyl)adenosine (i(6)A). The polypeptide is tRNA dimethylallyltransferase (Clostridium perfringens (strain SM101 / Type A)).